Reading from the N-terminus, the 477-residue chain is D(1B) dopamine receptor (477 aa).

The Extracellular segment spans residues 1-39 (MLPPGSNGTAYPGQFALYQQLAQGNAVGGSAGAPPLGPS). Asparagine 7 carries N-linked (GlcNAc...) asparagine glycosylation. A helical membrane pass occupies residues 40–66 (QVVTACLLTLLIIWTLLGNVLVCAAIV). The Cytoplasmic segment spans residues 67-77 (RSRHLRANMTN). The helical transmembrane segment at 78–104 (VFIVSLAVSDLFVALLVMPWKAVAEVA) threads the bilayer. The Extracellular portion of the chain corresponds to 105–114 (GYWPFGAFCD). Cysteine 113 and cysteine 217 form a disulfide bridge. A helical membrane pass occupies residues 115–136 (VWVAFDIMCSTASILNLCVISV). The Cytoplasmic segment spans residues 137–158 (DRYWAISRPFRYKRKMTQRMAL). Residues 159-180 (VMVGLAWTLSILISFIPVQLNW) traverse the membrane as a helical segment. Over 181-223 (HRDQAASWGGLDLPNNLANWTPWEEDFWEPDVNAENCDSSLNR) the chain is Extracellular. The N-linked (GlcNAc...) asparagine glycan is linked to asparagine 222. Residues 224 to 246 (TYAISSSLISFYIPVAIMIVTYT) form a helical membrane-spanning segment. Residues 247 to 296 (RIYRIAQVQIRRISSLERAAEHAQSCRSSAACAPDTSLRASIKKETKVLK) are Cytoplasmic-facing. A helical transmembrane segment spans residues 297–320 (TLSVIMGVFVCCWLPFFILNCMVP). Residues 321–340 (FCSGHPEGPPAGFPCVSETT) are Extracellular-facing. A helical transmembrane segment spans residues 341–360 (FDVFVWFGWANSSLNPVIYA). At 361–477 (FNADFQKVFA…ITPFTPNGFH (117 aa)) the chain is on the cytoplasmic side. Residue cysteine 375 is the site of S-palmitoyl cysteine attachment.

It belongs to the G-protein coupled receptor 1 family. Neuron-specific, localized primarily within limbic regions of the brain.

The protein resides in the cell membrane. In terms of biological role, dopamine receptor whose activity is mediated by G proteins which activate adenylyl cyclase. This Homo sapiens (Human) protein is D(1B) dopamine receptor (DRD5).